Reading from the N-terminus, the 302-residue chain is Rhomboid-related protein 2 (302 aa).

Residues methionine 1–phenylalanine 38 are disordered. Positions methionine 16–phenylalanine 38 are enriched in basic and acidic residues. 7 consecutive transmembrane segments (helical) span residues proline 71–tryptophan 91, leucine 127–isoleucine 147, valine 158–proline 178, leucine 182–valine 202, phenylalanine 211–leucine 231, valine 244–phenylalanine 264, and phenylalanine 277–phenylalanine 297. Serine 186 functions as the Nucleophile in the catalytic mechanism. Residue histidine 249 is part of the active site.

Belongs to the peptidase S54 family. Proteolytic processing of the proenzyme produces an N- and a C-terminal fragment. The processing is required for activation of the protease.

Its subcellular location is the cell membrane. It carries out the reaction Cleaves type-1 transmembrane domains using a catalytic dyad composed of serine and histidine that are contributed by different transmembrane domains.. In terms of biological role, involved in regulated intramembrane proteolysis and the subsequent release of functional polypeptides from their membrane anchors. Known substrate: EFNB3. The sequence is that of Rhomboid-related protein 2 (Rhbdl2) from Mus musculus (Mouse).